A 480-amino-acid polypeptide reads, in one-letter code: UDP-N-acetylmuramoyl-L-alanyl-D-glutamate--2,6-diaminopimelate ligase (480 aa).

Ser21 contacts UDP-N-acetyl-alpha-D-muramoyl-L-alanyl-D-glutamate. 98–104 is a binding site for ATP; it reads GTNGKSS. Residues 144–145, Ser171, Gln177, and Arg179 each bind UDP-N-acetyl-alpha-D-muramoyl-L-alanyl-D-glutamate; that span reads TT. Lys211 is modified (N6-carboxylysine). Meso-2,6-diaminopimelate is bound by residues Arg372, 396 to 399, Gly446, and Glu450; that span reads DNPR. The Meso-diaminopimelate recognition motif motif lies at 396 to 399; sequence DNPR.

The protein belongs to the MurCDEF family. MurE subfamily. Mg(2+) serves as cofactor. In terms of processing, carboxylation is probably crucial for Mg(2+) binding and, consequently, for the gamma-phosphate positioning of ATP.

Its subcellular location is the cytoplasm. It catalyses the reaction UDP-N-acetyl-alpha-D-muramoyl-L-alanyl-D-glutamate + meso-2,6-diaminopimelate + ATP = UDP-N-acetyl-alpha-D-muramoyl-L-alanyl-gamma-D-glutamyl-meso-2,6-diaminopimelate + ADP + phosphate + H(+). It participates in cell wall biogenesis; peptidoglycan biosynthesis. Catalyzes the addition of meso-diaminopimelic acid to the nucleotide precursor UDP-N-acetylmuramoyl-L-alanyl-D-glutamate (UMAG) in the biosynthesis of bacterial cell-wall peptidoglycan. This Rickettsia prowazekii (strain Madrid E) protein is UDP-N-acetylmuramoyl-L-alanyl-D-glutamate--2,6-diaminopimelate ligase.